Here is a 38-residue protein sequence, read N- to C-terminus: Potassium channel toxin alpha-KTx 2.3 (38 aa).

3 disulfides stabilise this stretch: Cys-7–Cys-29, Cys-13–Cys-34, and Cys-17–Cys-36.

This sequence belongs to the short scorpion toxin superfamily. Potassium channel inhibitor family. Alpha-KTx 02 subfamily. Expressed by the venom gland.

The protein resides in the secreted. Its function is as follows. Inhibitor of voltage-gated potassium channels (Kv). It is capable of displacing the binding of radio-labeled noxiustoxin (AC P08815) to rat brain synaptosomes with high affinity (about 100 pM). It is also capable of inhibiting transient potassium-currents (resembling I(A)-type currents), in cultured rat cerebellar granule cells. About 50% of the peak currents are reduced by application of a 1.5 uM solution of this toxin. The sequence is that of Potassium channel toxin alpha-KTx 2.3 from Centruroides limpidus (Mexican scorpion).